The primary structure comprises 263 residues: Ribonuclease HII (263 aa).

Residues 71–262 (QAIAGIDEVG…VKSMCCDSTN (192 aa)) form the RNase H type-2 domain. Positions 77, 78, and 172 each coordinate a divalent metal cation.

Belongs to the RNase HII family. Requires Mn(2+) as cofactor. It depends on Mg(2+) as a cofactor.

Its subcellular location is the cytoplasm. The enzyme catalyses Endonucleolytic cleavage to 5'-phosphomonoester.. Its function is as follows. Endonuclease that specifically degrades the RNA of RNA-DNA hybrids. This chain is Ribonuclease HII, found in Streptococcus pyogenes serotype M12 (strain MGAS2096).